The sequence spans 251 residues: Imidazole glycerol phosphate synthase subunit HisF (251 aa).

Residues Asp-11 and Asp-130 contribute to the active site.

This sequence belongs to the HisA/HisF family. In terms of assembly, heterodimer of HisH and HisF.

The protein localises to the cytoplasm. It catalyses the reaction 5-[(5-phospho-1-deoxy-D-ribulos-1-ylimino)methylamino]-1-(5-phospho-beta-D-ribosyl)imidazole-4-carboxamide + L-glutamine = D-erythro-1-(imidazol-4-yl)glycerol 3-phosphate + 5-amino-1-(5-phospho-beta-D-ribosyl)imidazole-4-carboxamide + L-glutamate + H(+). The protein operates within amino-acid biosynthesis; L-histidine biosynthesis; L-histidine from 5-phospho-alpha-D-ribose 1-diphosphate: step 5/9. IGPS catalyzes the conversion of PRFAR and glutamine to IGP, AICAR and glutamate. The HisF subunit catalyzes the cyclization activity that produces IGP and AICAR from PRFAR using the ammonia provided by the HisH subunit. In Chlorobaculum tepidum (strain ATCC 49652 / DSM 12025 / NBRC 103806 / TLS) (Chlorobium tepidum), this protein is Imidazole glycerol phosphate synthase subunit HisF.